An 853-amino-acid chain; its full sequence is Aryl hydrocarbon receptor (853 aa).

A propeptide spanning residues 1 to 9 (MSSGANITY) is cleaved from the precursor. Residues 1 to 38 (MSSGANITYASRKRRKPVQKTVKPVPAEGIKSNPSKRH) are disordered. 2 consecutive short sequence motifs (nuclear localization signal) follow at residues 12 to 15 (RKRR) and 36 to 41 (KRHRDR). The bHLH domain occupies 26–79 (PAEGIKSNPSKRHRDRLNTELDRLASLLPFPQDVINKLDKLSVLRLSVSYLRAK). Residues 37-65 (RHRDRLNTELDRLASLLPFPQDVINKLDK) are DNA-binding. 3 required for maintaining the overall integrity of the AHR:ARNT heterodimer and its transcriptional activity regions span residues 49–81 (LASLLPFPQDVINKLDKLSVLRLSVSYLRAKSF), 116–124 (LLQALNGFV), and 264–266 (FAI). The Nuclear export signal motif lies at 63–71 (LDKLSVLRL). One can recognise a PAS 1 domain in the interval 116–179 (LLQALNGFVL…RQLHWALNPS (64 aa)). Positions 273-340 (PSILEIRTKN…CAESHIRMIK (68 aa)) constitute a PAS 2 domain. The PAC domain maps to 346-384 (MTVFRLLAKHSRWRWVQSNARLIYRNGRPDYIIATQRPL). The tract at residues 429–451 (TKSNTSRKDWAPQSTPSKDSFHP) is disordered. Residues 440-451 (PQSTPSKDSFHP) are compositionally biased toward polar residues.

Homodimer. Heterodimer; efficient DNA binding requires dimerization with another bHLH protein. Interacts with ARNT; the heterodimer ARNT:AHR binds to core DNA sequence 5'-TGCGTG-3' within the dioxin response element (DRE) of target gene promoters and activates their transcription. Binds MYBBP1A. Interacts with coactivators including SRC-1, RIP140 and NOCA7, and with the corepressor SMRT. Interacts with NEDD8 and IVNS1ABP. Interacts with BMAL1. Interacts with HSP90AB1. Interacts with TIPARP; leading to mono-ADP-ribosylation of AHR and subsequent inhibition of AHR. Post-translationally, mono-ADP-ribosylated, leading to inhibit transcription activator activity of AHR. As to expression, expressed in all tissues tested including brain, heart, kidney, liver, lung, spleen, skeletal muscle and thymus.

Its subcellular location is the cytoplasm. It is found in the nucleus. Its function is as follows. Ligand-activated transcription factor that enables cells to adapt to changing conditions by sensing compounds from the environment, diet, microbiome and cellular metabolism, and which plays important roles in development, immunity and cancer. Upon ligand binding, translocates into the nucleus, where it heterodimerizes with ARNT and induces transcription by binding to xenobiotic response elements (XRE). Regulates a variety of biological processes, including angiogenesis, hematopoiesis, drug and lipid metabolism, cell motility and immune modulation. Xenobiotics can act as ligands: upon xenobiotic-binding, activates the expression of multiple phase I and II xenobiotic chemical metabolizing enzyme genes (such as the CYP1A1 gene). Mediates biochemical and toxic effects of halogenated aromatic hydrocarbons. Next to xenobiotics, natural ligands derived from plants, microbiota, and endogenous metabolism are potent AHR agonists. Tryptophan (Trp) derivatives constitute an important class of endogenous AHR ligands. Acts as a negative regulator of anti-tumor immunity: indoles and kynurenic acid generated by Trp catabolism act as ligand and activate AHR, thereby promoting AHR-driven cancer cell motility and suppressing adaptive immunity. Regulates the circadian clock by inhibiting the basal and circadian expression of the core circadian component PER1. Inhibits PER1 by repressing the CLOCK-BMAL1 heterodimer mediated transcriptional activation of PER1. The heterodimer ARNT:AHR binds to core DNA sequence 5'-TGCGTG-3' within the dioxin response element (DRE) of target gene promoters and activates their transcription. In Rattus norvegicus (Rat), this protein is Aryl hydrocarbon receptor (Ahr).